The chain runs to 1166 residues: MANGGGGGGGGGGGSSLRMSSNIHANHLSLDASSSSSSSSSSSSSSSSVHEPKMDALIIPVTMEVPCDSRGQRMWWAFLASSMVTFFGGLFIILLWRTLKYLWTVCCHCGGKTKEAQKINNGSSQADGTLKPVDEKEETVAAEVGWMTSVKDWAGVMISAQTLTGRVLVVLVFALSIGALVIYFIDSSNPIESCQNFYKDFTLQIDMAFNVFFLLYFGLRFIAANDKLWFWLEVNSVVDFFTVPPVFVSVYLNRSWLGLRFLRALRLIQFSEILQFLNILKTSNSIKLVNLLSIFISTWLTAAGFIHLVENSGDPWENFQNNQALTYWECVYLLMVTMSTVGYGDVYAKTTLGRLFMVFFILGGLAMFASYVPEIIELIGNRKKYGGSYSAVSGRKHIVVCGHITLESVSNFLKDFLHKDRDDVNVEIVFLHNISPNLELEALFKRHFTQVEFYQGSVLNPHDLARVKIESADACLILANKYCADPDAEDASNIMRVISIKNYHPKIRIITQMLQYHNKAHLLNIPSWNWKEGDDAICLAELKLGFIAQSCLAQGLSTMLANLFSMRSFIKIEEDTWQKYYLEGVSNEMYTEYLSSAFVGLSFPTVCELCFVKLKLLMIAIEYKSANRESRILINPGNHLKIQEGTLGFFIASDAKEVKRAFFYCKACHDDITDPKRIKKCGCKRLEDEQPSTLSPKKKQRNGGMRNSPSSSPKLMRHDPLLIPGNDQIDNMDSNVKKYDSTGMFHWCAPKEIEKVILTRSEAAMTVLSGHVVVCIFGDVSSALIGLRNLVMPLRASNFHYHELKHIVFVGSIEYLKREWETLHNFPKVSILPGTPLSRADLRAVNINLCDMCVILSANQNNIDDTSLQDKECILASLNIKSMQFDDSIGVLQANSQGFTPPGMDRSSPDNSPVHGMLRQPSITTGVNIPIITELVNDTNVQFLDQDDDDDPDTELYLTQPFACGTAFAVSVLDSLMSATYFNDNILTLIRTLVTGGATPELEALIAEENALRGGYSTPQTLANRDRCRVAQLALLDGPFADLGDGGCYGDLFCKALKTYNMLCFGIYRLRDAHLSTPSQCTKRYVITNPPYEFELVPTDLIFCLMQFDHNAGQSRASLSHSSHSSQSSSKKSSSVHSIPSTANRQNRPKSRESRDKQKYVQEERL.

Gly residues predominate over residues 1–15 (MANGGGGGGGGGGGS). Disordered stretches follow at residues 1 to 20 (MANG…LRMS) and 30 to 51 (LDAS…SVHE). The Extracellular portion of the chain corresponds to 1–74 (MANGGGGGGG…VPCDSRGQRM (74 aa)). Low complexity predominate over residues 33-48 (SSSSSSSSSSSSSSSS). Residues 75–95 (WWAFLASSMVTFFGGLFIILL) traverse the membrane as a helical segment. The Cytoplasmic segment spans residues 96-166 (WRTLKYLWTV…MISAQTLTGR (71 aa)). S-palmitoyl cysteine attachment occurs at residues cysteine 106, cysteine 107, and cysteine 109. At threonine 139 the chain carries Phosphothreonine; by CamK2. Residues 167–187 (VLVVLVFALSIGALVIYFIDS) form a helical membrane-spanning segment. The Extracellular segment spans residues 188 to 202 (SNPIESCQNFYKDFT). The helical transmembrane segment at 203–223 (LQIDMAFNVFFLLYFGLRFIA) threads the bilayer. Residues 224-227 (ANDK) lie on the Cytoplasmic side of the membrane. Residues 228-248 (LWFWLEVNSVVDFFTVPPVFV) traverse the membrane as a helical segment. The Extracellular segment spans residues 249-252 (SVYL). Residues 253–273 (NRSWLGLRFLRALRLIQFSEI) form a helical; Voltage-sensor membrane-spanning segment. The Cytoplasmic segment spans residues 274-288 (LQFLNILKTSNSIKL). A helical membrane pass occupies residues 289–309 (VNLLSIFISTWLTAAGFIHLV). At 310–323 (ENSGDPWENFQNNQ) the chain is on the extracellular side. The segment at residues 324–346 (ALTYWECVYLLMVTMSTVGYGDV) is an intramembrane region (pore-forming). The Selectivity for potassium motif lies at 340–343 (TVGY). Residues 347–355 (YAKTTLGRL) are Extracellular-facing. A helical transmembrane segment spans residues 356 to 376 (FMVFFILGGLAMFASYVPEII). Over 377 to 1166 (ELIGNRKKYG…KQKYVQEERL (790 aa)) the chain is Cytoplasmic. An RCK N-terminal 1 domain is found at 395–537 (RKHIVVCGHI…WNWKEGDDAI (143 aa)). Mg(2+) contacts are provided by glutamate 427, glutamine 450, and glutamate 452. A segment S7 region spans residues 544 to 564 (LGFIAQSCLAQGLSTMLANLF). Residues 601–621 (LSFPTVCELCFVKLKLLMIAI) form a segment S8 region. A heme-binding motif region spans residues 665-669 (CKACH). A disordered region spans residues 689 to 717 (EQPSTLSPKKKQRNGGMRNSPSSSPKLMR). A Phosphothreonine modification is found at threonine 693. 3 positions are modified to phosphoserine: serine 695, serine 708, and serine 712. The interval 767–787 (VLSGHVVVCIFGDVSSALIGL) is segment S9. Residues 769 to 913 (SGHVVVCIFG…MDRSSPDNSP (145 aa)) enclose the RCK N-terminal 2 domain. Threonine 900 bears the Phosphothreonine mark. Residues serine 908 and serine 912 each carry the phosphoserine modification. The short motif at 933–955 (TELVNDTNVQFLDQDDDDDPDTE) is the Calcium bowl element. Ca(2+) is bound by residues glutamine 942, aspartate 945, aspartate 948, and aspartate 950. Positions 962–982 (FACGTAFAVSVLDSLMSATYF) are segment S10. The span at 1116–1141 (RASLSHSSHSSQSSSKKSSSVHSIPS) shows a compositional bias: low complexity. Positions 1116–1166 (RASLSHSSHSSQSSSKKSSSVHSIPSTANRQNRPKSRESRDKQKYVQEERL) are disordered. Residues 1150 to 1166 (KSRESRDKQKYVQEERL) are compositionally biased toward basic and acidic residues. Phosphoserine; by PKG occurs at positions 1151 and 1154.

It belongs to the potassium channel family. Calcium-activated (TC 1.A.1.3) subfamily. KCa1.1/KCNMA1 sub-subfamily. Homotetramer; which constitutes the calcium-activated potassium channel. Interacts with beta subunits KCNMB1, KCNMB2, KCNMB3 and KCNMB4. Interacts with gamma subunits LRRC26, LRRC38, LRRC52 and LRRC55. Beta and gamma subunits are accessory, and modulate its activity. Interacts with RAB11B. Post-translationally, phosphorylated. Stimulated by PKG, but not by PKA. In smooth muscles, phosphorylation affects its activity. Phosphorylated. Exclusively stimulated by PKA. In smooth muscles, phosphorylation affects its activity. In terms of processing, incremental phosphorylation of Thr-139 of the KCNMA1 tetramer changes the response to ethanol from increased activation to inhibition of channel activity. Post-translationally, palmitoylation by ZDHHC22 and ZDHHC23 within the intracellular linker between the S0 and S1 transmembrane domains regulates localization to the plasma membrane. Depalmitoylated by LYPLA1 and LYPLAL1, leading to retard exit from the trans-Golgi network.

The protein localises to the cell membrane. It carries out the reaction K(+)(in) = K(+)(out). With respect to regulation, ethanol and carbon monoxide-bound heme increase channel activation. Heme inhibits channel activation. Phosphorylation of Thr-139 leads to inhibition of channel activity by ethanol. Functionally, potassium channel activated by both membrane depolarization or increase in cytosolic Ca(2+) that mediates export of K(+). It is also activated by concentration of cytosolic Mg(2+). Its activation dampens the excitatory events that elevate the cytosolic Ca(2+) concentration and/or depolarize the cell membrane. It therefore contributes to repolarization of the membrane potential. Plays a key role in controlling excitability in a number of systems, such as regulation of the contraction of smooth muscle, the tuning of hair cells in the cochlea, regulation of transmitter release, and innate immunity. In smooth muscles, its activation by high level of Ca(2+), caused by ryanodine receptors in the sarcoplasmic reticulum, regulates the membrane potential. In cochlea cells, its number and kinetic properties partly determine the characteristic frequency of each hair cell and thereby helps to establish a tonotopic map. Kinetics of KCNMA1 channels are determined by alternative splicing, phosphorylation status and its combination with modulating beta subunits. Highly sensitive to both iberiotoxin (IbTx) and charybdotoxin (CTX). This is Calcium-activated potassium channel subunit alpha-1 (KCNMA1) from Bos taurus (Bovine).